The chain runs to 601 residues: Elongation factor 4 (601 aa).

The tr-type G domain maps to 5–187 (IRKKNFCIIA…AICKYVPSPK (183 aa)). Residues 17–22 (DHGKST) and 134–137 (NKID) contribute to the GTP site.

The protein belongs to the TRAFAC class translation factor GTPase superfamily. Classic translation factor GTPase family. LepA subfamily.

It is found in the cell inner membrane. It carries out the reaction GTP + H2O = GDP + phosphate + H(+). Required for accurate and efficient protein synthesis under certain stress conditions. May act as a fidelity factor of the translation reaction, by catalyzing a one-codon backward translocation of tRNAs on improperly translocated ribosomes. Back-translocation proceeds from a post-translocation (POST) complex to a pre-translocation (PRE) complex, thus giving elongation factor G a second chance to translocate the tRNAs correctly. Binds to ribosomes in a GTP-dependent manner. The sequence is that of Elongation factor 4 from Borreliella afzelii (strain PKo) (Borrelia afzelii).